The following is a 191-amino-acid chain: Adenylate kinase (191 aa).

Gly12–Thr17 is a binding site for ATP. The NMP stretch occupies residues Ser34 to Val63. AMP contacts are provided by residues Thr35, Arg40, Glu61–Val63, Gly88–Arg91, and Gln95. The segment at Gly130–Asp136 is LID. Arg131 is an ATP binding site. Arg133 and Arg145 together coordinate AMP. Arg173 contacts ATP.

The protein belongs to the adenylate kinase family. In terms of assembly, monomer.

The protein resides in the cytoplasm. The enzyme catalyses AMP + ATP = 2 ADP. It participates in purine metabolism; AMP biosynthesis via salvage pathway; AMP from ADP: step 1/1. Catalyzes the reversible transfer of the terminal phosphate group between ATP and AMP. Plays an important role in cellular energy homeostasis and in adenine nucleotide metabolism. This chain is Adenylate kinase, found in Helicobacter pylori (strain G27).